The sequence spans 478 residues: Transcriptional regulator Erg (478 aa).

The segment covering 34 to 47 has biased composition (polar residues); sequence TASSSSEYGQTSKM. Disordered stretches follow at residues 34–56 and 73–93; these read TASS…QQDW and NQVN…GGKM. The PNT domain maps to 113 to 199; the sequence is IPPPNMTTNE…SHLHYLRETP (87 aa). The segment at 242–303 is disordered; the sequence is QRITTRPDLP…ILGPTSSRLA (62 aa). The span at 259-280 shows a compositional bias: polar residues; that stretch reads AWTSHSHPTQSKATQPSSSTVP. A DNA-binding region (ETS) is located at residues 310-390; it reads IQLWQFLLEL…HGKRYAYKFD (81 aa).

This sequence belongs to the ETS family. Expressed in mesoderm- and, to a lesser extent, in ectoderm-derived tissues.

The protein resides in the nucleus. In terms of biological role, acts as a transcriptional activator. The sequence is that of Transcriptional regulator Erg (ERG) from Gallus gallus (Chicken).